Reading from the N-terminus, the 723-residue chain is Polyribonucleotide nucleotidyltransferase (723 aa).

Mg(2+)-binding residues include aspartate 488 and aspartate 494. The KH domain occupies 555–614; it reads PKIITLNIKPEKIKDVIGPGGKQINAIIDETGVKIDIEQDGTVYIASQDQAMNRKAIAII. One can recognise an S1 motif domain in the interval 624–692; that stretch reads GEVYTGKVRR…QQGRVNLSRK (69 aa). The tract at residues 692–723 is disordered; the sequence is KALLEKKEQPEGDKKPQAEKKFYPKTKKPESK. A compositionally biased stretch (basic and acidic residues) spans 693-723; it reads ALLEKKEQPEGDKKPQAEKKFYPKTKKPESK.

This sequence belongs to the polyribonucleotide nucleotidyltransferase family. Requires Mg(2+) as cofactor.

Its subcellular location is the cytoplasm. It carries out the reaction RNA(n+1) + phosphate = RNA(n) + a ribonucleoside 5'-diphosphate. Its function is as follows. Involved in mRNA degradation. Catalyzes the phosphorolysis of single-stranded polyribonucleotides processively in the 3'- to 5'-direction. This is Polyribonucleotide nucleotidyltransferase from Listeria monocytogenes serovar 1/2a (strain ATCC BAA-679 / EGD-e).